Consider the following 333-residue polypeptide: GTPase Obg (333 aa).

Residues 1-159 (MKFIDEATIT…ATVRLELKLL (159 aa)) enclose the Obg domain. Positions 63 to 85 (KQFAAPNGAPGEGRQKTGKSGDD) are disordered. Residues 75 to 84 (GRQKTGKSGD) are compositionally biased toward basic and acidic residues. The OBG-type G domain maps to 160 to 329 (ADVGLIGLPN…LKKHLFELLC (170 aa)). Residues 166-173 (GLPNAGKS), 191-195 (FTTLS), 213-216 (DIPG), 283-286 (NKMD), and 310-312 (SAA) contribute to the GTP site. 2 residues coordinate Mg(2+): S173 and T193.

Belongs to the TRAFAC class OBG-HflX-like GTPase superfamily. OBG GTPase family. As to quaternary structure, monomer. Mg(2+) is required as a cofactor.

The protein resides in the cytoplasm. Functionally, an essential GTPase which binds GTP, GDP and possibly (p)ppGpp with moderate affinity, with high nucleotide exchange rates and a fairly low GTP hydrolysis rate. Plays a role in control of the cell cycle, stress response, ribosome biogenesis and in those bacteria that undergo differentiation, in morphogenesis control. The sequence is that of GTPase Obg from Desulfosudis oleivorans (strain DSM 6200 / JCM 39069 / Hxd3) (Desulfococcus oleovorans).